Here is a 204-residue protein sequence, read N- to C-terminus: Somatotropin (204 aa).

An N-terminal signal peptide occupies residues 1–17 (MDRVVLMLSVMSLGVSS). Gln18 bears the Pyrrolidone carboxylic acid mark. His36 is a binding site for Zn(2+). A disulfide bridge links Cys69 with Cys177. Glu186 contacts Zn(2+). The cysteines at positions 194 and 202 are disulfide-linked.

This sequence belongs to the somatotropin/prolactin family.

It is found in the secreted. Its function is as follows. Growth hormone plays an important role in growth control and is involved in the regulation of several anabolic processes. Implicated as an osmoregulatory substance important for seawater adaptation. This Sparus aurata (Gilthead sea bream) protein is Somatotropin (gh).